Here is a 465-residue protein sequence, read N- to C-terminus: Botryococcus squalene synthase (465 aa).

Arg48 and Arg73 together coordinate NADP(+). Mg(2+) is bound by residues Asp76, Glu79, and Asp80. Residues Arg215, Lys315, and Arg317 each coordinate NADP(+). 2 consecutive transmembrane segments (helical) span residues 395–415 and 429–449; these read AIRLLLLVGVVAYFAYAFNLG and ILDLSQKGLAVASVALLLLVL.

It belongs to the phytoene/squalene synthase family.

It is found in the membrane. It carries out the reaction presqualene diphosphate + NADPH + H(+) = squalene + diphosphate + NADP(+). In terms of biological role, produces squalene when coexpressed with SSL-1 and bisfarnesyl ether and a very small amount of squalene when incubated alone in the presence of NADPH. The sequence is that of Botryococcus squalene synthase (SSL-2) from Botryococcus braunii (Green alga).